The following is a 326-amino-acid chain: H-2 class I histocompatibility antigen, Q8 alpha chain (326 aa).

A signal peptide spans methionine 1–alanine 21. Positions glycine 22–glycine 111 are alpha-1. The Extracellular portion of the chain corresponds to glycine 22–methionine 305. N-linked (GlcNAc...) asparagine glycosylation is present at asparagine 107. Residues glycine 112–threonine 203 form an alpha-2 region. 2 disulfides stabilise this stretch: cysteine 122–cysteine 185 and cysteine 224–cysteine 280. Residues aspartate 204–tryptophan 295 form an alpha-3 region. Positions proline 206–arginine 294 constitute an Ig-like C1-type domain. Asparagine 277 is a glycosylation site (N-linked (GlcNAc...) asparagine). The interval glutamate 296–methionine 305 is connecting peptide. Residues alanine 306 to leucine 326 traverse the membrane as a helical segment.

Belongs to the MHC class I family. Heterodimer of an alpha chain and a beta chain (beta-2-microglobulin).

Its subcellular location is the membrane. Involved in the presentation of foreign antigens to the immune system. This chain is H-2 class I histocompatibility antigen, Q8 alpha chain (H2-Q8), found in Mus musculus (Mouse).